A 467-amino-acid polypeptide reads, in one-letter code: tRNA-2-methylthio-N(6)-dimethylallyladenosine synthase (467 aa).

A disordered region spans residues 1 to 20 (MSDDTTQIEPAMAQETSPRA). In terms of domain architecture, MTTase N-terminal spans 23 to 143 (RKVFVKTYGC…LPNALARVRG (121 aa)). The [4Fe-4S] cluster site is built by C32, C68, C106, C184, C188, and C191. The Radical SAM core domain occupies 170-402 (RKRGVSAFLT…QALLSAQQYA (233 aa)). A TRAM domain is found at 405-467 (DSMIGRKMDV…TNSLIAQKLA (63 aa)).

This sequence belongs to the methylthiotransferase family. MiaB subfamily. In terms of assembly, monomer. [4Fe-4S] cluster serves as cofactor.

The protein localises to the cytoplasm. It carries out the reaction N(6)-dimethylallyladenosine(37) in tRNA + (sulfur carrier)-SH + AH2 + 2 S-adenosyl-L-methionine = 2-methylsulfanyl-N(6)-dimethylallyladenosine(37) in tRNA + (sulfur carrier)-H + 5'-deoxyadenosine + L-methionine + A + S-adenosyl-L-homocysteine + 2 H(+). In terms of biological role, catalyzes the methylthiolation of N6-(dimethylallyl)adenosine (i(6)A), leading to the formation of 2-methylthio-N6-(dimethylallyl)adenosine (ms(2)i(6)A) at position 37 in tRNAs that read codons beginning with uridine. In Brucella canis (strain ATCC 23365 / NCTC 10854 / RM-666), this protein is tRNA-2-methylthio-N(6)-dimethylallyladenosine synthase.